The primary structure comprises 290 residues: Bifunctional protein FolD (290 aa).

Residues Gly165–Gly167, Ser194, and Ile235 each bind NADP(+).

The protein belongs to the tetrahydrofolate dehydrogenase/cyclohydrolase family. In terms of assembly, homodimer.

The catalysed reaction is (6R)-5,10-methylene-5,6,7,8-tetrahydrofolate + NADP(+) = (6R)-5,10-methenyltetrahydrofolate + NADPH. It carries out the reaction (6R)-5,10-methenyltetrahydrofolate + H2O = (6R)-10-formyltetrahydrofolate + H(+). It functions in the pathway one-carbon metabolism; tetrahydrofolate interconversion. Catalyzes the oxidation of 5,10-methylenetetrahydrofolate to 5,10-methenyltetrahydrofolate and then the hydrolysis of 5,10-methenyltetrahydrofolate to 10-formyltetrahydrofolate. The chain is Bifunctional protein FolD from Syntrophotalea carbinolica (strain DSM 2380 / NBRC 103641 / GraBd1) (Pelobacter carbinolicus).